The sequence spans 183 residues: Probable GTP-binding protein EngB (183 aa).

An EngB-type G domain is found at 17 to 183 (DYPEVVFVGR…KKELLSRILN (167 aa)). GTP-binding positions include 25 to 32 (GRSNVGKS), 51 to 55 (GRTRA), 69 to 72 (DVPG), 137 to 140 (TKID), and 166 to 168 (SSA). Residues S32 and T53 each contribute to the Mg(2+) site.

It belongs to the TRAFAC class TrmE-Era-EngA-EngB-Septin-like GTPase superfamily. EngB GTPase family. Requires Mg(2+) as cofactor.

Necessary for normal cell division and for the maintenance of normal septation. This Aquifex aeolicus (strain VF5) protein is Probable GTP-binding protein EngB.